The following is a 333-amino-acid chain: HTH-type transcriptional repressor PurR (333 aa).

The region spanning 2 to 56 (ATIKDVAKMAGVSTTTVSHVINKTRFVAKETEQQVLQAIKNLNYSPSAVARSLKV) is the HTH lacI-type domain. The H-T-H motif DNA-binding region spans 4 to 23 (IKDVAKMAGVSTTTVSHVIN). Residues 48-56 (SAVARSLKV) mediate DNA binding. Hypoxanthine is bound by residues Tyr73, Lys189, Thr191, Phe220, and Asp274.

In terms of assembly, homodimer.

It functions in the pathway purine metabolism; purine nucleotide biosynthesis [regulation]. Is the main repressor of the genes involved in the de novo synthesis of purine nucleotides, regulating purB, purC, purEK, purF, purHD, purL, purMN and guaBA expression. PurR is allosterically activated to bind its cognate DNA by binding the purine corepressors, hypoxanthine or guanine, thereby effecting transcription repression. The chain is HTH-type transcriptional repressor PurR from Histophilus somni (strain 129Pt) (Haemophilus somnus).